A 359-amino-acid chain; its full sequence is Type-1 angiotensin II receptor (359 aa).

The Extracellular portion of the chain corresponds to 1-25; that stretch reads MILNSSTEDGIKRIQDDCPKAGRHN. N-linked (GlcNAc...) asparagine glycosylation is present at Asn-4. The angiotensin II site is built by Gln-15 and Asp-17. Intrachain disulfides connect Cys-18–Cys-274 and Cys-101–Cys-180. Residues 26–55 form a helical membrane-spanning segment; sequence YIFIMIPTLYSIIFVVGIFGNSLVVIVIYF. Topologically, residues 56-61 are cytoplasmic; the sequence is YMKLKT. Residues 62–89 traverse the membrane as a helical segment; sequence VASVFLLNLALADLCFLLTLPLWAVYTA. Residues 90-98 lie on the Extracellular side of the membrane; that stretch reads MEYRWPFGN. Residues 99–125 form a helical membrane-spanning segment; that stretch reads YLCKIASASVSFNLYASVFLLTCLSID. Topologically, residues 126-141 are cytoplasmic; the sequence is RYLAIVHPMKSRLRRT. Residues 142–165 form a helical membrane-spanning segment; sequence MLVAKVTCIIIWLLAGLASLPTII. Over 166–190 the chain is Extracellular; sequence HRNVFFIENTNITVCAFHYESQNST. Position 167 (Arg-167) interacts with angiotensin II. N-linked (GlcNAc...) asparagine glycosylation is present at Asn-176. Angiotensin II is bound by residues Phe-182, His-183, and Tyr-184. Asn-188 carries an N-linked (GlcNAc...) asparagine glycan. The chain crosses the membrane as a helical span at residues 191-216; it reads LPVGLGLTKNILGFLFPFLIILTSYT. Lys-199 contributes to the angiotensin II binding site. The Cytoplasmic segment spans residues 217-239; it reads LIWKTLKKAYEIQKNKPRKDDIF. The chain crosses the membrane as a helical span at residues 240–268; sequence KIILAIVLFFFFSWVPHQIFTFMDVLIQL. Residues 269-278 are Extracellular-facing; that stretch reads GLIRDCKIED. Residues 279 to 304 traverse the membrane as a helical segment; that stretch reads IVDTAMPITICLAYFNNCLNPLFYGF. The Cytoplasmic portion of the chain corresponds to 305–359; that stretch reads LGKKFKKYFLQLLKYIPPKAKSHSNLSTKMSTLSYRPSENGNSSTKKPAPCIEVE. A compositionally biased stretch (polar residues) spans 336-350; the sequence is TLSYRPSENGNSSTK. The interval 336–359 is disordered; sequence TLSYRPSENGNSSTKKPAPCIEVE. Residue Cys-355 is the site of S-palmitoyl cysteine attachment.

Belongs to the G-protein coupled receptor 1 family. As to quaternary structure, interacts with MAS1. Interacts with ARRB1. Interacts with FLNA (via filamin repeat 21); increases PKA-mediated phosphorylation of FLNA. C-terminal Ser or Thr residues may be phosphorylated. In terms of tissue distribution, adrenal medulla, cortex and kidney.

It is found in the cell membrane. Receptor for angiotensin II, a vasoconstricting peptide, which acts as a key regulator of blood pressure and sodium retention by the kidney. The activated receptor in turn couples to G-alpha proteins G(q) (GNAQ, GNA11, GNA14 or GNA15) and thus activates phospholipase C and increases the cytosolic Ca(2+) concentrations, which in turn triggers cellular responses such as stimulation of protein kinase C. The sequence is that of Type-1 angiotensin II receptor (AGTR1) from Bos taurus (Bovine).